A 49-amino-acid polypeptide reads, in one-letter code: Large ribosomal subunit protein bL33B (49 aa).

This sequence belongs to the bacterial ribosomal protein bL33 family.

The sequence is that of Large ribosomal subunit protein bL33B from Bacillus anthracis.